Reading from the N-terminus, the 131-residue chain is Insertion element IS1 protein InsB (131 aa).

It belongs to the transposase 27 family.

Absolutely required for transposition of IS1. The polypeptide is Insertion element IS1 protein InsB (insB1) (Shigella flexneri).